The primary structure comprises 330 residues: MTLIVTGAAGFIGSNLVKALNERGEQRIIAVDNLTRADKFKNLVDCEIDDYLDKTEFVERFRRGDFGKVRAIFHEGACSDTMETDGRYMMDNNFRYSRDVLDVCLAQNIQFLYASSAATYGGSSRFVEEREVEQPLNVYGYSKFLFDQVIRRVLPTAKSQIAGFRYFNVYGPRETHKARMASVAFHNFNQFRAEGKVKLFGEYNGYAAGEQTRDFVSVEDVVKVNLFFFDNPDKSGIFNLGSGRAQPFNDIASTVVNTLRSLNNEPALSLADQVQRGLIEYIPFPDALRGKYQCFTQADQSKLRAAGYDAPFLSVQEGVDRYVRWLFGQV.

NADP(+)-binding positions include Phe11–Ile12, Asp32–Asn33, Lys39, Lys54, Glu75–Ser79, and Asn92. Catalysis depends on Tyr139, which acts as the Proton acceptor. Lys143 provides a ligand contact to NADP(+). Residue Asn168 participates in substrate binding. Residues Val169 and Lys177 each contribute to the NADP(+) site. The active-site Proton acceptor is Lys177. Substrate contacts are provided by residues Arg179, His186, Phe200–Tyr203, Arg213, and Tyr292.

It belongs to the NAD(P)-dependent epimerase/dehydratase family. HldD subfamily. Homopentamer. The cofactor is NADP(+).

It carries out the reaction ADP-D-glycero-beta-D-manno-heptose = ADP-L-glycero-beta-D-manno-heptose. It functions in the pathway nucleotide-sugar biosynthesis; ADP-L-glycero-beta-D-manno-heptose biosynthesis; ADP-L-glycero-beta-D-manno-heptose from D-glycero-beta-D-manno-heptose 7-phosphate: step 4/4. Functionally, catalyzes the interconversion between ADP-D-glycero-beta-D-manno-heptose and ADP-L-glycero-beta-D-manno-heptose via an epimerization at carbon 6 of the heptose. This is ADP-L-glycero-D-manno-heptose-6-epimerase from Paraburkholderia phytofirmans (strain DSM 17436 / LMG 22146 / PsJN) (Burkholderia phytofirmans).